Consider the following 76-residue polypeptide: Defensin-like protein 125 (76 aa).

The first 25 residues, 1–25, serve as a signal peptide directing secretion; the sequence is MTKAITLAIFMVVLVLGMVTKETQG. Intrachain disulfides connect cysteine 30–cysteine 74, cysteine 41–cysteine 60, cysteine 46–cysteine 68, and cysteine 50–cysteine 70.

This sequence belongs to the DEFL family.

It localises to the secreted. The polypeptide is Defensin-like protein 125 (LCR54) (Arabidopsis thaliana (Mouse-ear cress)).